A 417-amino-acid chain; its full sequence is Tyrosine--tRNA ligase (417 aa).

Position 34 (tyrosine 34) interacts with L-tyrosine. Positions 39-48 match the 'HIGH' region motif; that stretch reads PTAKSIHIGN. Tyrosine 165 and glutamine 169 together coordinate L-tyrosine. Residues 227–231 carry the 'KMSKS' region motif; that stretch reads KFGKS. Residue lysine 230 coordinates ATP. Positions 349–416 constitute an S4 RNA-binding domain; it reads TDVVELLVKD…GKKKYFLAKV (68 aa).

The protein belongs to the class-I aminoacyl-tRNA synthetase family. TyrS type 1 subfamily. As to quaternary structure, homodimer.

Its subcellular location is the cytoplasm. The catalysed reaction is tRNA(Tyr) + L-tyrosine + ATP = L-tyrosyl-tRNA(Tyr) + AMP + diphosphate + H(+). Functionally, catalyzes the attachment of tyrosine to tRNA(Tyr) in a two-step reaction: tyrosine is first activated by ATP to form Tyr-AMP and then transferred to the acceptor end of tRNA(Tyr). This is Tyrosine--tRNA ligase from Oenococcus oeni (strain ATCC BAA-331 / PSU-1).